The chain runs to 391 residues: tRNA-specific 2-thiouridylase MnmA (391 aa).

Residues 20–27 (AMSGGVDS) and L46 each bind ATP. The Nucleophile role is filled by C114. C114 and C210 form a disulfide bridge. An ATP-binding site is contributed by G138. An interaction with tRNA region spans residues 160–162 (RDQ). The active-site Cysteine persulfide intermediate is C210.

Belongs to the MnmA/TRMU family.

It is found in the cytoplasm. The enzyme catalyses S-sulfanyl-L-cysteinyl-[protein] + uridine(34) in tRNA + AH2 + ATP = 2-thiouridine(34) in tRNA + L-cysteinyl-[protein] + A + AMP + diphosphate + H(+). Its function is as follows. Catalyzes the 2-thiolation of uridine at the wobble position (U34) of tRNA, leading to the formation of s(2)U34. This chain is tRNA-specific 2-thiouridylase MnmA, found in Bartonella bacilliformis (strain ATCC 35685 / KC583 / Herrer 020/F12,63).